A 305-amino-acid chain; its full sequence is UDP-3-O-acyl-N-acetylglucosamine deacetylase (305 aa).

Positions 79, 238, and 242 each coordinate Zn(2+). His-265 functions as the Proton donor in the catalytic mechanism.

The protein belongs to the LpxC family. Requires Zn(2+) as cofactor.

The catalysed reaction is a UDP-3-O-[(3R)-3-hydroxyacyl]-N-acetyl-alpha-D-glucosamine + H2O = a UDP-3-O-[(3R)-3-hydroxyacyl]-alpha-D-glucosamine + acetate. Its pathway is glycolipid biosynthesis; lipid IV(A) biosynthesis; lipid IV(A) from (3R)-3-hydroxytetradecanoyl-[acyl-carrier-protein] and UDP-N-acetyl-alpha-D-glucosamine: step 2/6. Functionally, catalyzes the hydrolysis of UDP-3-O-myristoyl-N-acetylglucosamine to form UDP-3-O-myristoylglucosamine and acetate, the committed step in lipid A biosynthesis. In Vibrio parahaemolyticus serotype O3:K6 (strain RIMD 2210633), this protein is UDP-3-O-acyl-N-acetylglucosamine deacetylase.